We begin with the raw amino-acid sequence, 162 residues long: Large ribosomal subunit protein uL15 (162 aa).

A compositionally biased stretch (basic and acidic residues) spans 1–13 (MKLNEIRDNEGAT). Residues 1 to 37 (MKLNEIRDNEGATKNRMRVGRGIGSGKGKTAGRGVKG) form a disordered region. Positions 21–35 (RGIGSGKGKTAGRGV) are enriched in gly residues.

This sequence belongs to the universal ribosomal protein uL15 family. Part of the 50S ribosomal subunit.

In terms of biological role, binds to the 23S rRNA. The polypeptide is Large ribosomal subunit protein uL15 (Methylobacterium nodulans (strain LMG 21967 / CNCM I-2342 / ORS 2060)).